The primary structure comprises 284 residues: Bifunctional protein FolD (284 aa).

Residues 165-167, threonine 192, and valine 233 contribute to the NADP(+) site; that span reads GRG.

Belongs to the tetrahydrofolate dehydrogenase/cyclohydrolase family. Homodimer.

It carries out the reaction (6R)-5,10-methylene-5,6,7,8-tetrahydrofolate + NADP(+) = (6R)-5,10-methenyltetrahydrofolate + NADPH. It catalyses the reaction (6R)-5,10-methenyltetrahydrofolate + H2O = (6R)-10-formyltetrahydrofolate + H(+). It participates in one-carbon metabolism; tetrahydrofolate interconversion. In terms of biological role, catalyzes the oxidation of 5,10-methylenetetrahydrofolate to 5,10-methenyltetrahydrofolate and then the hydrolysis of 5,10-methenyltetrahydrofolate to 10-formyltetrahydrofolate. The chain is Bifunctional protein FolD from Corynebacterium efficiens (strain DSM 44549 / YS-314 / AJ 12310 / JCM 11189 / NBRC 100395).